Reading from the N-terminus, the 208-residue chain is Imidazoleglycerol-phosphate dehydratase (208 aa).

Residues Met-1–Ser-22 are disordered.

This sequence belongs to the imidazoleglycerol-phosphate dehydratase family.

The protein resides in the cytoplasm. The enzyme catalyses D-erythro-1-(imidazol-4-yl)glycerol 3-phosphate = 3-(imidazol-4-yl)-2-oxopropyl phosphate + H2O. Its pathway is amino-acid biosynthesis; L-histidine biosynthesis; L-histidine from 5-phospho-alpha-D-ribose 1-diphosphate: step 6/9. This is Imidazoleglycerol-phosphate dehydratase from Haloquadratum walsbyi (strain DSM 16790 / HBSQ001).